The primary structure comprises 429 residues: Endo-1,4-beta-xylanase 1 (429 aa).

A signal peptide spans 1–19 (MQTKSILTAALLAAAPASA). Residues 43-336 (NSDQQYNRIL…KPAWTSISSV (294 aa)) enclose the GH10 domain. Catalysis depends on E150, which acts as the Proton donor. E257 functions as the Nucleophile in the catalytic mechanism. A disulfide bridge connects residues C286 and C292. The segment at 364–395 (TTPPPISSPIVPSTTTTSAVPTTTVSPPEPEQ) is disordered. The span at 371–389 (SPIVPSTTTTSAVPTTTVS) shows a compositional bias: low complexity. A CBM1 domain is found at 393 to 429 (PEQTRWGQCGGIGWNGPTKCQSPWTCTRLNDWYFQCL).

This sequence belongs to the glycosyl hydrolase 10 (cellulase F) family.

It localises to the secreted. It carries out the reaction Endohydrolysis of (1-&gt;4)-beta-D-xylosidic linkages in xylans.. Its pathway is glycan degradation; xylan degradation. Endo-1,4-beta-xylanase involved in the hydrolysis of xylan, a major structural heterogeneous polysaccharide found in plant biomass representing the second most abundant polysaccharide in the biosphere, after cellulose. This is Endo-1,4-beta-xylanase 1 from Humicola insolens (Soft-rot fungus).